The primary structure comprises 201 residues: MARYIGPKHKLCRRVGRPLCGSAKCPALKRPYRPGQHGPGRPQKLSEYGAQLLEKQKLRFIYGVMERQFRRYFEQAQRSRGVTGEVLLQLLEQRLDTVVYRLGFARTMAAARQLVGHGHVTLNGRRVDIASCQVKPGDVVGLTQKARSLAVVRESLDLRRPVPPYLSLDETTMTSRLQRLPLREEIPVDVDESLVVELYAR.

The 64-residue stretch at 93–156 (QRLDTVVYRL…RSLAVVRESL (64 aa)) folds into the S4 RNA-binding domain.

It belongs to the universal ribosomal protein uS4 family. Part of the 30S ribosomal subunit. Contacts protein S5. The interaction surface between S4 and S5 is involved in control of translational fidelity.

In terms of biological role, one of the primary rRNA binding proteins, it binds directly to 16S rRNA where it nucleates assembly of the body of the 30S subunit. Functionally, with S5 and S12 plays an important role in translational accuracy. In Symbiobacterium thermophilum (strain DSM 24528 / JCM 14929 / IAM 14863 / T), this protein is Small ribosomal subunit protein uS4B.